A 585-amino-acid polypeptide reads, in one-letter code: Butyrophilin subfamily 3 member A3 (585 aa).

An N-terminal signal peptide occupies residues 1–29; it reads MKMASSLACLLLNFHVSVFLVQLLTPCSA. Ig-like V-type domains lie at 30–139 and 145–236; these read QFSV…KALV and ALGS…ASIS. Over 30–248 the chain is Extracellular; sequence QFSVLGPSGP…DPFFTSAQPW (219 aa). 2 disulfide bridges follow: Cys52/Cys126 and Cys166/Cys220. N-linked (GlcNAc...) asparagine glycosylation occurs at Asn115. A helical membrane pass occupies residues 249 to 269; that stretch reads IAALAGTLPISLLLLAGASYF. The Cytoplasmic segment spans residues 270–585; it reads LWRQQKEKIA…KPQACTEALY (316 aa). Positions 322–518 constitute a B30.2/SPRY domain; sequence RGEKSLAYHE…LTICPTPKEV (197 aa). Positions 560–585 are disordered; the sequence is AGAEGVSPSTTTSQNHKPQACTEALY. The span at 566–576 shows a compositional bias: polar residues; that stretch reads SPSTTTSQNHK.

This sequence belongs to the immunoglobulin superfamily. BTN/MOG family.

It is found in the membrane. This chain is Butyrophilin subfamily 3 member A3 (BTN3A3), found in Pongo abelii (Sumatran orangutan).